Reading from the N-terminus, the 253-residue chain is 5'/3'-nucleotidase SurE (253 aa).

The a divalent metal cation site is built by D8, D9, S39, and N92.

Belongs to the SurE nucleotidase family. Requires a divalent metal cation as cofactor.

Its subcellular location is the cytoplasm. The enzyme catalyses a ribonucleoside 5'-phosphate + H2O = a ribonucleoside + phosphate. It catalyses the reaction a ribonucleoside 3'-phosphate + H2O = a ribonucleoside + phosphate. The catalysed reaction is [phosphate](n) + H2O = [phosphate](n-1) + phosphate + H(+). Functionally, nucleotidase with a broad substrate specificity as it can dephosphorylate various ribo- and deoxyribonucleoside 5'-monophosphates and ribonucleoside 3'-monophosphates with highest affinity to 3'-AMP. Also hydrolyzes polyphosphate (exopolyphosphatase activity) with the preference for short-chain-length substrates (P20-25). Might be involved in the regulation of dNTP and NTP pools, and in the turnover of 3'-mononucleotides produced by numerous intracellular RNases (T1, T2, and F) during the degradation of various RNAs. This is 5'/3'-nucleotidase SurE from Serratia proteamaculans (strain 568).